A 683-amino-acid chain; its full sequence is Translation factor guf1, mitochondrial (683 aa).

The transit peptide at 1–43 (MRGCLQLARWLSAAPKGTAASLTRAPFVLANAPRFFTSSASHA) directs the protein to the mitochondrion. In terms of domain architecture, tr-type G spans 66–250 (ERYRNFCIVA…KIPAYGYFPV (185 aa)). Residues 75 to 82 (AHVDHGKS), 139 to 143 (DTPGH), and 193 to 196 (NKVD) contribute to the GTP site.

It belongs to the TRAFAC class translation factor GTPase superfamily. Classic translation factor GTPase family. LepA subfamily.

Its subcellular location is the mitochondrion inner membrane. The enzyme catalyses GTP + H2O = GDP + phosphate + H(+). In terms of biological role, promotes mitochondrial protein synthesis. May act as a fidelity factor of the translation reaction, by catalyzing a one-codon backward translocation of tRNAs on improperly translocated ribosomes. Binds to mitochondrial ribosomes in a GTP-dependent manner. This is Translation factor guf1, mitochondrial (guf1) from Neosartorya fischeri (strain ATCC 1020 / DSM 3700 / CBS 544.65 / FGSC A1164 / JCM 1740 / NRRL 181 / WB 181) (Aspergillus fischerianus).